Reading from the N-terminus, the 576-residue chain is Peroxisomal targeting signal receptor (576 aa).

Residue Cys10 forms a Glycyl cysteine thioester (Cys-Gly) (interchain with G-Cter in ubiquitin) linkage. Residues Ala11–Ser33 form an amphipathic helix 1 (AH1) region. Lys22 is covalently cross-linked (Glycyl lysine isopeptide (Lys-Gly) (interchain with G-Cter in ubiquitin)). The amphipathic helix 2 (AH2) stretch occupies residues Arg58 to Phe75. 2 consecutive short sequence motifs (wxxxF/Y motif) follow at residues Trp100–Phe104 and Trp128–Phe132. The interval Ala176–Gln195 is disordered. The short motif at Trp196–Phe200 is the WxxxF/Y motif 3 element. The interval Phe224 to Leu240 is amphipathic helix 4 (AH4). A WxxxF/Y motif 4 motif is present at residues Trp249 to Phe253. TPR repeat units follow at residues Pro278 to His311, Val312 to Asn345, Leu346 to Arg383, Ala384 to Asp421, Ala422 to Lys455, Ala456 to Phe489, and Val490 to Glu523.

It belongs to the peroxisomal targeting signal receptor family. As to quaternary structure, interacts (via WxxxF/Y and LVxEF motifs) with PEX14; promoting translocation through the PEX13-PEX14 docking complex. Interacts with PEX8. A disulfide bond is created between Cys-10 and Cys-338 or Cys-444. Post-translationally, monoubiquitinated at Cys-10 by PEX2 during PEX5 passage through the retrotranslocation channel: monoubiquitination acts as a signal for PEX5 extraction and is required for proper export from peroxisomes and recycling. When PEX5 recycling is compromised, polyubiquitinated at Lys-22 by PEX10 during its passage through the retrotranslocation channel, leading to its degradation.

The protein localises to the peroxisome membrane. It localises to the cytoplasm. The protein resides in the cytosol. Its subcellular location is the peroxisome matrix. Receptor that mediates peroxisomal import of proteins containing a C-terminal PTS1-type tripeptide peroxisomal targeting signal (SKL-type). Binds to cargo proteins containing a PTS1 peroxisomal targeting signal in the cytosol, and translocates them into the peroxisome matrix by passing through the peroxisomal docking complex along with cargo proteins. PEX5 receptor is then retrotranslocated into the cytosol, leading to release of bound cargo in the peroxisome matrix, and reset for a subsequent peroxisome import cycle. Required for PEX7 ubiquitination. The polypeptide is Peroxisomal targeting signal receptor (Komagataella phaffii (strain GS115 / ATCC 20864) (Yeast)).